The sequence spans 796 residues: Phenylalanine--tRNA ligase beta subunit (796 aa).

The region spanning 39–149 is the tRNA-binding domain; the sequence is SAALKSFRVA…GDAPLGTTFA (111 aa). Residues 398 to 470 form the B5 domain; it reads LARKALAYDP…RVHGLDAVPS (73 aa). Mg(2+) is bound by residues Asp-448, Asp-454, Glu-457, and Glu-458. The region spanning 703–795 is the FDX-ACB domain; sequence PALQAVTRDF…AAGKLGAELR (93 aa).

The protein belongs to the phenylalanyl-tRNA synthetase beta subunit family. Type 1 subfamily. In terms of assembly, tetramer of two alpha and two beta subunits. The cofactor is Mg(2+).

It is found in the cytoplasm. It catalyses the reaction tRNA(Phe) + L-phenylalanine + ATP = L-phenylalanyl-tRNA(Phe) + AMP + diphosphate + H(+). The chain is Phenylalanine--tRNA ligase beta subunit from Novosphingobium aromaticivorans (strain ATCC 700278 / DSM 12444 / CCUG 56034 / CIP 105152 / NBRC 16084 / F199).